Consider the following 173-residue polypeptide: Probable calcium-binding protein CML14 (173 aa).

4 consecutive EF-hand domains span residues serine 21–arginine 56, proline 57–threonine 92, valine 97–proline 132, and leucine 133–aspartate 168. Residues aspartate 34, asparagine 36, aspartate 38, serine 40, glutamate 45, aspartate 70, asparagine 72, asparagine 74, serine 76, glutamate 81, aspartate 110, aspartate 112, asparagine 114, glutamate 121, aspartate 146, aspartate 148, aspartate 150, and glutamate 157 each contribute to the Ca(2+) site.

Functionally, potential calcium sensor. This Oryza sativa subsp. japonica (Rice) protein is Probable calcium-binding protein CML14 (CML14).